The primary structure comprises 364 residues: tRNA/tmRNA (uracil-C(5))-methyltransferase (364 aa).

The S-adenosyl-L-methionine site is built by Q186, Y214, N219, E235, and D295. The active-site Nucleophile is the C320. E354 acts as the Proton acceptor in catalysis.

It belongs to the class I-like SAM-binding methyltransferase superfamily. RNA M5U methyltransferase family. TrmA subfamily.

It catalyses the reaction uridine(54) in tRNA + S-adenosyl-L-methionine = 5-methyluridine(54) in tRNA + S-adenosyl-L-homocysteine + H(+). It carries out the reaction uridine(341) in tmRNA + S-adenosyl-L-methionine = 5-methyluridine(341) in tmRNA + S-adenosyl-L-homocysteine + H(+). In terms of biological role, dual-specificity methyltransferase that catalyzes the formation of 5-methyluridine at position 54 (m5U54) in all tRNAs, and that of position 341 (m5U341) in tmRNA (transfer-mRNA). This is tRNA/tmRNA (uracil-C(5))-methyltransferase from Azoarcus sp. (strain BH72).